We begin with the raw amino-acid sequence, 327 residues long: Phosphate acyltransferase (327 aa).

The protein belongs to the PlsX family. As to quaternary structure, homodimer. Probably interacts with PlsY.

Its subcellular location is the cytoplasm. It catalyses the reaction a fatty acyl-[ACP] + phosphate = an acyl phosphate + holo-[ACP]. It participates in lipid metabolism; phospholipid metabolism. Catalyzes the reversible formation of acyl-phosphate (acyl-PO(4)) from acyl-[acyl-carrier-protein] (acyl-ACP). This enzyme utilizes acyl-ACP as fatty acyl donor, but not acyl-CoA. The sequence is that of Phosphate acyltransferase from Thermosipho africanus (strain TCF52B).